The chain runs to 558 residues: Armadillo repeat-containing X-linked protein 5 (558 aa).

Basic and acidic residues-rich tracts occupy residues 1–14 (MVDSGTEARARGKA) and 139–156 (KSHDKANTGSRPDRREEA). Disordered stretches follow at residues 1 to 34 (MVDSGTEARARGKAEAGLQDGISGPAAARVNGKT) and 139 to 163 (KSHDKANTGSRPDRREEASIGMKSS). 4 ARM repeats span residues 300-339 (CKSRGFSLEPKEFDKLVALLKLTKDPFIHEIATMIMGISP), 422-461 (VKFEDHYVITSYIPDFLTLLNKGSVKTKFYVLKVFSCLSK), 463-503 (HANT…NINF), and 520-558 (SELISIFQEAKQFGQKLQDLAEHSDPEVRDKVIRLILKL).

It belongs to the eutherian X-chromosome-specific Armcx family.

The chain is Armadillo repeat-containing X-linked protein 5 (ARMCX5) from Pongo abelii (Sumatran orangutan).